We begin with the raw amino-acid sequence, 602 residues long: Exopolysaccharide phosphotransferase SCO2594 (602 aa).

A disordered region spans residues 251–271 (PRAGEDLDAGDGAAGGPRPGL).

Belongs to the stealth family.

In Streptomyces coelicolor (strain ATCC BAA-471 / A3(2) / M145), this protein is Exopolysaccharide phosphotransferase SCO2594.